Here is a 541-residue protein sequence, read N- to C-terminus: Protein panoramix (541 aa).

The segment at 1–169 (MEAPMKLEVK…TLVPDEQQSF (169 aa)) is interaction with Piwi. Disordered regions lie at residues 52–75 (SDPE…LQPS) and 198–281 (TAEN…TELD). Residues 194–216 (MLEMTAENRKVKHKKKKHKKERS) adopt a coiled-coil conformation. Positions 203 to 220 (KVKHKKKKHKKERSHRSN) are enriched in basic residues. 2 stretches are compositionally biased toward basic and acidic residues: residues 241-251 (DDKNQFDCDYR) and 269-279 (SSKERKLRDTE). The segment at 315–343 (LSKADKRSLAVARAELVLEQIQQKANKEE) is nxf2-interacting region (NIR). Positions 323–343 (LAVARAELVLEQIQQKANKEE) form a coiled coil. Residues 387–446 (TPGTRIDLSKWGLETVPEATKRLLRLLGIDVARLKELQSTVKPSQRILKLKKEQLEQGLA) form a necessary for interaction with nxf2 and protein stability region.

As to quaternary structure, in the ovaries, part of a complex composed of at least Panx, nxf2, piwi and Nxt1. The complex is knowns as Panx-induced cotranscriptional silencing (PICTS) complex, Panx-nxf2-dependent TAP/p15 silencing (Pandas complex), SFiNX (silencing factor interacting nuclear export variant) or piwi-Panx-nxf2-p15 (PPNP) complex. Interacts (via NIR region) with nxf2 (via TAP-C domain); the interaction is direct. As to expression, expressed in female gonads (at protein level).

The protein resides in the nucleus. Functionally, acts via the piwi-interacting RNA (piRNA) pathway which mediates the repression of transposable elements during meiosis by forming complexes composed of piRNAs and piwi proteins and governs the methylation and subsequent repression of transposons. Required for transcriptional silencing of transposons targeted by piwi and confers its effects by interacting with nascent RNA transcripts. Likely to be recruited to nascent transcripts cotranscriptionally by piwi and to recruit additional factors involved in transcriptional silencing. In the ovaries, forms a complex with nxf2, piwi and Nxt1 which acts as effectors of cotranscriptional transposon silencing. The interaction with nxf2 stabilizes the nuclear protein complex. The protein is Protein panoramix of Drosophila melanogaster (Fruit fly).